The chain runs to 339 residues: Glyceraldehyde-3-phosphate dehydrogenase (339 aa).

NAD(+) contacts are provided by residues Arg-12–Ile-13, Asp-35, and Lys-84. D-glyceraldehyde 3-phosphate is bound by residues Ser-155–Thr-157, Thr-186, Thr-215–Gly-216, and Arg-238. Cys-156 acts as the Nucleophile in catalysis. Asn-320 is an NAD(+) binding site.

This sequence belongs to the glyceraldehyde-3-phosphate dehydrogenase family. In terms of assembly, homotetramer.

Its subcellular location is the cytoplasm. It carries out the reaction D-glyceraldehyde 3-phosphate + phosphate + NAD(+) = (2R)-3-phospho-glyceroyl phosphate + NADH + H(+). It functions in the pathway carbohydrate degradation; glycolysis; pyruvate from D-glyceraldehyde 3-phosphate: step 1/5. In Mastigamoeba balamuthi (Phreatamoeba balamuthi), this protein is Glyceraldehyde-3-phosphate dehydrogenase (GAPD).